The sequence spans 144 residues: 3-hydroxyacyl-[acyl-carrier-protein] dehydratase FabZ (144 aa).

His-48 is a catalytic residue.

The protein belongs to the thioester dehydratase family. FabZ subfamily.

It is found in the cytoplasm. The catalysed reaction is a (3R)-hydroxyacyl-[ACP] = a (2E)-enoyl-[ACP] + H2O. Involved in unsaturated fatty acids biosynthesis. Catalyzes the dehydration of short chain beta-hydroxyacyl-ACPs and long chain saturated and unsaturated beta-hydroxyacyl-ACPs. This Chloroflexus aggregans (strain MD-66 / DSM 9485) protein is 3-hydroxyacyl-[acyl-carrier-protein] dehydratase FabZ.